The following is a 314-amino-acid chain: Aspartate carbamoyltransferase catalytic subunit (314 aa).

Carbamoyl phosphate contacts are provided by R55 and T56. K83 serves as a coordination point for L-aspartate. Carbamoyl phosphate contacts are provided by R105, H139, and Q142. Residues R172 and R226 each coordinate L-aspartate. Carbamoyl phosphate-binding residues include G267 and P268.

This sequence belongs to the aspartate/ornithine carbamoyltransferase superfamily. ATCase family. Heterododecamer (2C3:3R2) of six catalytic PyrB chains organized as two trimers (C3), and six regulatory PyrI chains organized as three dimers (R2).

The enzyme catalyses carbamoyl phosphate + L-aspartate = N-carbamoyl-L-aspartate + phosphate + H(+). It participates in pyrimidine metabolism; UMP biosynthesis via de novo pathway; (S)-dihydroorotate from bicarbonate: step 2/3. Its function is as follows. Catalyzes the condensation of carbamoyl phosphate and aspartate to form carbamoyl aspartate and inorganic phosphate, the committed step in the de novo pyrimidine nucleotide biosynthesis pathway. This Rhodococcus erythropolis (strain PR4 / NBRC 100887) protein is Aspartate carbamoyltransferase catalytic subunit.